Here is a 347-residue protein sequence, read N- to C-terminus: Selenide, water dikinase (347 aa).

C17 is a catalytic residue. Residues K20 and 48–50 (TRD) each bind ATP. D51 contacts Mg(2+). ATP is bound by residues D68, D91, and 139 to 141 (GHS). D91 is a Mg(2+) binding site. D227 provides a ligand contact to Mg(2+).

It belongs to the selenophosphate synthase 1 family. Class I subfamily. As to quaternary structure, homodimer. Requires Mg(2+) as cofactor.

The enzyme catalyses hydrogenselenide + ATP + H2O = selenophosphate + AMP + phosphate + 2 H(+). Its function is as follows. Synthesizes selenophosphate from selenide and ATP. The sequence is that of Selenide, water dikinase from Enterobacter sp. (strain 638).